An 893-amino-acid chain; its full sequence is Flippase kinase 1 (893 aa).

A compositionally biased stretch (basic and acidic residues) spans 1–23 (MAGHHHEHEQERDHEQEHEHDSL). Disordered regions lie at residues 1–124 (MAGH…SSKL), 129–148 (PMTSVANASPASPPLSPTIP), and 163–243 (QHEH…ERAG). The span at 24-42 (QRPTTGSERTRSISFSKLL) shows a compositional bias: polar residues. The span at 49 to 62 (NASSSNNMSVSSVN) shows a compositional bias: low complexity. The span at 76-87 (NNSGSEGQSSRF) shows a compositional bias: polar residues. Over residues 96–122 (SGNSSKNASAHNSSQSSLEGDSASSSS) the composition is skewed to low complexity. 5 positions are modified to phosphoserine: S140, S144, S171, S175, and S185. Low complexity predominate over residues 206–216 (SQNSNNSSSTS). Over residues 228 to 237 (GSQGFSSNNP) the composition is skewed to polar residues. S300 is modified (phosphoserine). Polar residues predominate over residues 334 to 355 (DTLNGSPSRGSSKSPTITQTFP). The interval 334–480 (DTLNGSPSRG…PRRSRRLRTK (147 aa)) is disordered. Residues 370-380 (NNDKHDEKEEQ) show a composition bias toward basic and acidic residues. Polar residues predominate over residues 381–399 (QTTTDNKTRNLSPTKQNGK). S414 is subject to Phosphoserine. The segment covering 422-439 (ASATSPTSSSARKTSGSS) has biased composition (low complexity). S462 carries the post-translational modification Phosphoserine. In terms of domain architecture, Protein kinase spans 496–777 (FEKIRLLGQG…AADVKKHPFF (282 aa)). ATP contacts are provided by residues 502 to 510 (LGQGDVGKV) and K525. The active-site Proton acceptor is the D621. The AGC-kinase C-terminal domain occupies 778-861 (KKVQWSLLRN…MSLMEQDNNS (84 aa)). The disordered stretch occupies residues 874–893 (AYTPNSNRSRSNSHRTFFKR). Over residues 884 to 893 (SNSHRTFFKR) the composition is skewed to basic residues.

This sequence belongs to the protein kinase superfamily. Ser/Thr protein kinase family. KIN82 subfamily. Post-translationally, the N-terminal non-catalytic domain is phosphorylated by YPK1.

The protein resides in the cytoplasm. It is found in the cell membrane. The catalysed reaction is L-seryl-[protein] + ATP = O-phospho-L-seryl-[protein] + ADP + H(+). It carries out the reaction L-threonyl-[protein] + ATP = O-phospho-L-threonyl-[protein] + ADP + H(+). Its activity is regulated as follows. Down-regulated by YKP1 phosphorylation. This effect is counteracted in the presence of mannosyl-inositolphosphorylceramide (MIPC). Its function is as follows. Flippase activator that phosphorylates DNF1 and DNF2 and which is involved in the generation of phospholipid asymmetry in membranes by the inward translocation of phospholipids and in the retrieval pathway from early endosomes to the trans-Golgi network (TGN). Also phosphorylates the N-terminal half of YPK1. Involved in pheromone-response. This chain is Flippase kinase 1 (FPK1), found in Saccharomyces cerevisiae (strain ATCC 204508 / S288c) (Baker's yeast).